The chain runs to 649 residues: tRNA-guanine(15) transglycosylase (649 aa).

The Nucleophile role is filled by Asp-88. Residues Asp-123 and Ala-194 each coordinate substrate. Residues Cys-280, Cys-282, and Cys-285 each coordinate Zn(2+). In terms of domain architecture, PUA spans 573–648 (KYRIVIDSSV…VAATLRGGLK (76 aa)).

The protein belongs to the archaeosine tRNA-ribosyltransferase family. Zn(2+) serves as cofactor.

The enzyme catalyses guanosine(15) in tRNA + 7-cyano-7-deazaguanine = 7-cyano-7-carbaguanosine(15) in tRNA + guanine. The protein operates within tRNA modification; archaeosine-tRNA biosynthesis. Its function is as follows. Exchanges the guanine residue with 7-cyano-7-deazaguanine (preQ0) at position 15 in the dihydrouridine loop (D-loop) of archaeal tRNAs. In Methanococcus maripaludis (strain C6 / ATCC BAA-1332), this protein is tRNA-guanine(15) transglycosylase.